A 681-amino-acid chain; its full sequence is Leucine-rich repeat, immunoglobulin-like domain and transmembrane domain-containing protein 3 (681 aa).

The first 19 residues, 1-19 (MWLSACLCLVLSFLGGVNG), serve as a signal peptide directing secretion. N-linked (GlcNAc...) asparagine glycosylation is present at asparagine 18. The Lumenal portion of the chain corresponds to 20 to 584 (TCPSQCSCEY…RVEGRGSQWS (565 aa)). LRR repeat units lie at residues 56–79 (PVDT…AFYY), 80–103 (LVEL…SFYN), 104–128 (LRQL…LLDM), 129–151 (PHLR…AVRY), and 152–175 (LRNL…FLDS). The 91-residue stretch at 254-344 (PSVMMSATKI…GISEAVVTVT (91 aa)) folds into the Ig-like domain. Cysteine 275 and cysteine 328 are oxidised to a cystine. Asparagine 296 is a glycosylation site (N-linked (GlcNAc...) asparagine). 2 disordered regions span residues 350–391 (TTTL…GLTS) and 425–464 (TSVQ…KFPP). Residues 378–391 (TPPSKSWLSPGLTS) show a composition bias toward polar residues. Residues asparagine 485 and asparagine 506 are each glycosylated (N-linked (GlcNAc...) asparagine). Residues 585 to 605 (LLLVVTSTACVIVVPLICFLL) form a helical membrane-spanning segment. The Cytoplasmic segment spans residues 606–681 (YKVCKLQCTS…SDGCRTEYYG (76 aa)).

Detected in the outer plexiform layer (OPL) of the retina, where it localizes to rod and cone ON-bipolar cells (at protein level). Also detected in bipolar cell bodies in the inner retinal layer (INL) (at protein level).

The protein localises to the cell projection. It localises to the dendrite. The protein resides in the perikaryon. Its subcellular location is the endoplasmic reticulum membrane. Plays a role in the synapse formation and synaptic transmission between cone photoreceptor cells and retinal bipolar cells. Required for normal transmission of a light-evoked stimulus from the cone photoreceptor cells to the ON-bipolar cells and ON-ganglion cells in the inner retina. Required in retinal ON-bipolar cells for normal localization of the cation channel TRPM1 at dendrite tips. Seems to play a specific role in synaptic contacts made by ON-bipolar cells with cone photoreceptor pedicles. May also have a role in cone synapse formation. Might facilitate FGFR1 exit from the endoplasmic reticulum to the Golgi. Could be a regulator of the FGFRs. This is Leucine-rich repeat, immunoglobulin-like domain and transmembrane domain-containing protein 3 from Mus musculus (Mouse).